Reading from the N-terminus, the 232-residue chain is Protein Mis18-alpha (232 aa).

Ser-36, Ser-39, and Ser-40 each carry phosphoserine. Residues 79 to 177 (PLVFLCSGCR…SVEAIESYVL (99 aa)) form the Mis18 domain. Residues Cys-84, Cys-87, Cys-140, and Cys-143 each contribute to the Zn(2+) site. Lys-161 participates in a covalent cross-link: Glycyl lysine isopeptide (Lys-Gly) (interchain with G-Cter in SUMO2). Ser-232 carries the post-translational modification Phosphoserine.

It belongs to the mis18 family. As to quaternary structure, homodimer, and heterodimer with OIP5/MIS18B. Identified in a complex containing MIS18A, OIP5/MIS18B, MIS18BP1, RBBP7 and RBBP4.

The protein localises to the nucleus. It localises to the chromosome. Its subcellular location is the centromere. Functionally, required for recruitment of CENPA to centromeres and normal chromosome segregation during mitosis. The polypeptide is Protein Mis18-alpha (MIS18A) (Pan troglodytes (Chimpanzee)).